Here is an 872-residue protein sequence, read N- to C-terminus: Alanine--tRNA ligase (872 aa).

The Zn(2+) site is built by His567, His571, Cys669, and His673.

Belongs to the class-II aminoacyl-tRNA synthetase family. Zn(2+) serves as cofactor.

Its subcellular location is the cytoplasm. The catalysed reaction is tRNA(Ala) + L-alanine + ATP = L-alanyl-tRNA(Ala) + AMP + diphosphate. Functionally, catalyzes the attachment of alanine to tRNA(Ala) in a two-step reaction: alanine is first activated by ATP to form Ala-AMP and then transferred to the acceptor end of tRNA(Ala). Also edits incorrectly charged Ser-tRNA(Ala) and Gly-tRNA(Ala) via its editing domain. This chain is Alanine--tRNA ligase, found in Streptococcus pneumoniae serotype 4 (strain ATCC BAA-334 / TIGR4).